The sequence spans 417 residues: MASSKLREPVDEVFDLDLAVPETARLDSSLHKARAQLLAKGRRHRPSRSRLRDSASSAEDGEGSDGPGGKVTDGCGSPLHRLRSPLHSGPGSPAGGSFCLDPPGLRRSLDEDEPPPSPLTRYRPLHNAASHEGLAAASCSPPRSAPSSDSSPSFVRRHPRAEPHSEDDSRDASPPEPASPTIGLDKKTRRKFLDLGVTLRRASTGKSRKEKGSNRLSMGSRESVEGSGRSGGSPFLPFSWFTDSGKGSASSGSTTSPTCSPKHEGFSPKKSASQESTLSDDSTPPSSSPKIPSGPWQEAKCSYPYHTLSQSSDEFLDEPLPPVHHWTSQQVGQWLQSLNLEQYAAEFAARQVDGPQLLQLDGSKLKSLGLSNSHDRALVKRKLKEMAAAAEKERKAQEKAARQREKLRRREQEAKKS.

2 disordered regions span residues 37–299 and 388–417; these read LLAK…WQEA and AAAE…AKKS. The segment covering 40–49 has biased composition (basic residues); sequence KGRRHRPSRS. Residues Ser84 and Ser108 each carry the phosphoserine modification. Positions 135 to 153 are enriched in low complexity; it reads AAASCSPPRSAPSSDSSPS. Positions 160–173 are enriched in basic and acidic residues; sequence RAEPHSEDDSRDAS. Residues Ser173 and Ser179 each carry the phosphoserine modification. Composition is skewed to low complexity over residues 244-260 and 276-295; these read SGKG…PTCS and STLS…PSGP. Ser279 is modified (phosphoserine). Thr283 carries the phosphothreonine modification. The SAM domain occupies 326-389; that stretch reads WTSQQVGQWL…KRKLKEMAAA (64 aa). The stretch at 377-417 forms a coiled coil; that stretch reads ALVKRKLKEMAAAAEKERKAQEKAARQREKLRRREQEAKKS. The span at 390-417 shows a compositional bias: basic and acidic residues; that stretch reads AEKERKAQEKAARQREKLRRREQEAKKS.

This is Sterile alpha motif domain-containing protein 14 (SAMD14) from Homo sapiens (Human).